Reading from the N-terminus, the 439-residue chain is MGKPIVAIVGRPNVGKSTLFNKLAGKRIAIVQDTPGVTRDRIYAEAEWLNYKFTMIDTGGIEPESEDIIVSQMRRQAQIAIEMANVIIFLVDGKEGLAPADEEVAQMLRKSKKPVVLVVNKIDKLKDENNAYEFYNLGIGDPVTISSSQALGLGDMLDRVVEYFKDDESDGEDDERINIAFIGKPNVGKSSLINKLLGEERLIVSDIPGTTRDSIDSYVDTEFGEFTLIDTAGLRRKSKVKEEIERYSVIRTYASIERADVCILMIDAIEGISEQDQKIIGYAHDINKAILVIVNKWDLVEKDDKTMDKFKKELKVNLSFMPYAKYLFISAKTGQRVVKVLQTAKECYDNYTKRVKTGVLNDVISQAIMMKEPPIVGTKRLKIYYVTQIGTKPPTFIFFVNDPACIHFSYQRYLENQLRENFDFQGTGIKTEFRERKEK.

EngA-type G domains follow at residues 4–168 and 177–352; these read PIVA…KDDE and INIA…DNYT. Residues 10 to 17, 57 to 61, 120 to 123, 183 to 190, 230 to 234, and 295 to 298 contribute to the GTP site; these read GRPNVGKS, DTGGI, NKID, GKPNVGKS, DTAGL, and NKWD. Residues 353–437 form the KH-like domain; the sequence is KRVKTGVLND…GIKTEFRERK (85 aa).

It belongs to the TRAFAC class TrmE-Era-EngA-EngB-Septin-like GTPase superfamily. EngA (Der) GTPase family. Associates with the 50S ribosomal subunit.

In terms of biological role, GTPase that plays an essential role in the late steps of ribosome biogenesis. The polypeptide is GTPase Der (Clostridium botulinum (strain Loch Maree / Type A3)).